The chain runs to 237 residues: 2-C-methyl-D-erythritol 4-phosphate cytidylyltransferase (237 aa).

This sequence belongs to the IspD/TarI cytidylyltransferase family. IspD subfamily. In terms of assembly, homodimer.

The enzyme catalyses 2-C-methyl-D-erythritol 4-phosphate + CTP + H(+) = 4-CDP-2-C-methyl-D-erythritol + diphosphate. Its pathway is isoprenoid biosynthesis; isopentenyl diphosphate biosynthesis via DXP pathway; isopentenyl diphosphate from 1-deoxy-D-xylulose 5-phosphate: step 2/6. Functionally, catalyzes the formation of 4-diphosphocytidyl-2-C-methyl-D-erythritol from CTP and 2-C-methyl-D-erythritol 4-phosphate (MEP). The polypeptide is 2-C-methyl-D-erythritol 4-phosphate cytidylyltransferase (Pectobacterium atrosepticum (strain SCRI 1043 / ATCC BAA-672) (Erwinia carotovora subsp. atroseptica)).